Reading from the N-terminus, the 78-residue chain is Large ribosomal subunit protein bL28 (78 aa).

A disordered region spans residues 1 to 25; the sequence is MSRVCQVTGKRPAVGNNRSHAKNAT.

This sequence belongs to the bacterial ribosomal protein bL28 family.

This is Large ribosomal subunit protein bL28 from Aliivibrio salmonicida (strain LFI1238) (Vibrio salmonicida (strain LFI1238)).